The sequence spans 536 residues: Subtilisin-like proteinase Spm1 (536 aa).

A signal peptide spans 1–15 (MKSVILLSLAACAVA). A propeptide spanning residues 16–147 (APTAGVETIH…RYEEVKKDEC (132 aa)) is cleaved from the precursor. In terms of domain architecture, Inhibitor I9 spans 44-137 (YIIKFKKHVD…IERDTIVHTM (94 aa)). Positions 156 to 462 (PWGLSRVSHR…GGCSNYFEIV (307 aa)) constitute a Peptidase S8 domain. Catalysis depends on charge relay system residues aspartate 192 and histidine 224. N-linked (GlcNAc...) asparagine glycosylation is found at asparagine 254 and asparagine 294. Catalysis depends on serine 390, which acts as the Charge relay system.

Belongs to the peptidase S8 family.

The protein localises to the vacuole. This is Subtilisin-like proteinase Spm1 (SPM1) from Pyricularia oryzae (strain 70-15 / ATCC MYA-4617 / FGSC 8958) (Rice blast fungus).